The primary structure comprises 209 residues: Transcription elongation factor A protein-like 4 (209 aa).

M1 carries the post-translational modification N-acetylmethionine. Residues 1–125 (MEKLYNENEG…VPRKAKRKTN (125 aa)) are disordered. Residues 25–96 (QDERKPEVAC…GSEREGKPES (72 aa)) are compositionally biased toward basic and acidic residues. Phosphoserine is present on residues S88 and S96.

This sequence belongs to the TFS-II family. TFA subfamily.

The protein resides in the nucleus. May be involved in transcriptional regulation. The polypeptide is Transcription elongation factor A protein-like 4 (TCEAL4) (Pongo abelii (Sumatran orangutan)).